A 225-amino-acid polypeptide reads, in one-letter code: O-methyltransferase rstn1 (225 aa).

S-adenosyl-L-methionine-binding residues include Gln-97 and His-142.

Belongs to the methyltransferase superfamily.

The catalysed reaction is desmethylrestrictinol + S-adenosyl-L-methionine = restrictinol + S-adenosyl-L-homocysteine + H(+). The protein operates within antifungal biosynthesis. Functionally, O-methyltransferase; part of the gene cluster that mediates the biosynthesis of the tetrahydropyranyl antifungal agent restricticin that acts as an inhibitor of CYP51 and blocks the ergosterol biosynthesis. Within the pathway, rstn1 uses S-adenosylmethionine to methylate position C4 of desmethylrestrictinol to produce restrictinol. The highly reducing polyketide synthase rstn3, the short chain dehydrogenase rstn4, the cyclase rstn5, the FAD-dependent monooxygenase rstn6 and the enoylreductase rstn7 are required to generate the first stable intermediate desmethylrestrictinol. Rstn3 with rstn7 biosynthesize the first polyketide chain intermediate that is reduced by rstn4, followed by epoxidation by rstn6 before 6-endo cyclization via epoxide opening by rstn5 leads to desmethylrestrictinol. The methyltransferase rstn1 then catalyzes the C4 O-methylation of desmethylrestrictinol to produce restrictinol, and the nonribosomal peptide synthetase rstn8 catalyzes the C3 esterification of restrictinol with glycine that leads to restricticin. This is O-methyltransferase rstn1 from Aspergillus nomiae NRRL (strain ATCC 15546 / NRRL 13137 / CBS 260.88 / M93).